The chain runs to 392 residues: MAGVQRRILISRNEENLLNKGIGTKNVLGGKTTSTRTALSNISNIQRRPQLGGKVKKEDVGALEEKAPTNKSLGRMISQTNLLNEVQMKKNIQNLEDMAEVDLPINSMIDSFTDLEVDDIDLEDLGNPTLCAEYVKDIYKYMNKLEQRLVPGDYMPNQTEINFKMRSILVDWLIQVQSRFNLLQETLYLTIYILDRFLNKQNVKRAELQLVGVTAMLLASKYEEMYAPEIGDFVYITDNAYSKEKIRQMEQKMLKACEYDFSNPLCLHFLRRNSKAGAVDAQKHTLAKYLMELTLVEYEFITKLPSEVAAAALYLSMKLIDDSNWTPTLVHYSGYTEDAILPTVSKLSVLTLSMDNSKYQAVKNKYAASKFLRISRIPQLKGHVLNKFAERI.

It belongs to the cyclin family. Cyclin AB subfamily.

In terms of biological role, essential for the control of the cell cycle at the G2/M (mitosis) transition. Interacts with the CDC2 protein kinase to form MPF. G2/M cyclins accumulate steadily during G2 and are abruptly destroyed at mitosis. The sequence is that of G2/mitotic-specific cyclin-B from Hydra viridissima (Green hydra).